The sequence spans 257 residues: Imidazole glycerol phosphate synthase subunit HisF (257 aa).

Residues aspartate 12 and aspartate 131 contribute to the active site.

The protein belongs to the HisA/HisF family. As to quaternary structure, heterodimer of HisH and HisF.

Its subcellular location is the cytoplasm. It catalyses the reaction 5-[(5-phospho-1-deoxy-D-ribulos-1-ylimino)methylamino]-1-(5-phospho-beta-D-ribosyl)imidazole-4-carboxamide + L-glutamine = D-erythro-1-(imidazol-4-yl)glycerol 3-phosphate + 5-amino-1-(5-phospho-beta-D-ribosyl)imidazole-4-carboxamide + L-glutamate + H(+). The protein operates within amino-acid biosynthesis; L-histidine biosynthesis; L-histidine from 5-phospho-alpha-D-ribose 1-diphosphate: step 5/9. Its function is as follows. IGPS catalyzes the conversion of PRFAR and glutamine to IGP, AICAR and glutamate. The HisF subunit catalyzes the cyclization activity that produces IGP and AICAR from PRFAR using the ammonia provided by the HisH subunit. This is Imidazole glycerol phosphate synthase subunit HisF from Hydrogenovibrio crunogenus (strain DSM 25203 / XCL-2) (Thiomicrospira crunogena).